The sequence spans 213 residues: Thiopurine S-methyltransferase (213 aa).

Tryptophan 10, leucine 46, glutamate 67, and arginine 124 together coordinate S-adenosyl-L-methionine.

This sequence belongs to the class I-like SAM-binding methyltransferase superfamily. TPMT family.

Its subcellular location is the cytoplasm. The enzyme catalyses S-adenosyl-L-methionine + a thiopurine = S-adenosyl-L-homocysteine + a thiopurine S-methylether.. The sequence is that of Thiopurine S-methyltransferase from Xanthobacter autotrophicus (strain ATCC BAA-1158 / Py2).